Consider the following 428-residue polypeptide: Histidine--tRNA ligase (428 aa).

It belongs to the class-II aminoacyl-tRNA synthetase family. In terms of assembly, homodimer.

The protein resides in the cytoplasm. The catalysed reaction is tRNA(His) + L-histidine + ATP = L-histidyl-tRNA(His) + AMP + diphosphate + H(+). This Lactobacillus delbrueckii subsp. bulgaricus (strain ATCC BAA-365 / Lb-18) protein is Histidine--tRNA ligase.